Here is a 391-residue protein sequence, read N- to C-terminus: Pectate lyase B (391 aa).

Residues 1 to 30 (MKKTVRSLCSTALALTLGFTLLSGPASVQA) form the signal peptide. 3 residues coordinate Ca(2+): Asp-181, Asp-203, and Asp-207. Residue Arg-305 is part of the active site.

It belongs to the polysaccharide lyase 1 family. The cofactor is Ca(2+).

It localises to the secreted. The enzyme catalyses Eliminative cleavage of (1-&gt;4)-alpha-D-galacturonan to give oligosaccharides with 4-deoxy-alpha-D-galact-4-enuronosyl groups at their non-reducing ends.. It carries out the reaction Eliminative cleavage of (1-&gt;4)-alpha-D-galacturonan methyl ester to give oligosaccharides with 4-deoxy-6-O-methyl-alpha-D-galact-4-enuronosyl groups at their non-reducing ends.. Its pathway is glycan metabolism; pectin degradation. In terms of biological role, catalyzes the depolymerization of both polygalacturonate and pectins of various methyl esterification degree, with an endo mode of action. Shows the highest activity on 20 to 34% methylated pectin but retains 67%, 51%, 25%, and 1% of its maximum activity on polygalacturonate and 8.5%, 55 to 70%, and 90% methylated pectin, respectively. The sequence is that of Pectate lyase B from Paenibacillus amylolyticus.